The following is a 1296-amino-acid chain: MVFKNKLFFSSKKSGSSSPDSSNSPRSVGSNSPIRSDKKKSKSASKDEPPIPIPGFVGVGCKQTQIKDGLKKKDGSSKGKQLSSEVQAHSIGKSNLSPSSEVKKPPPPEVKEGPAFVSPIMASSLGLNRIKTRSGPLPQERVFNYRNDPATSNLSKMGADGGDLGSGSATSGSGSGNRKKEAGSSKLGLEENMDRTRPSDNKSDRDSLSPDTGPPRSLSPTLPPSGSRLQNVASSSGTGRSEMSSGRSGPLRNSDFCTPENSYEWENPKESESPRYQALLRMTSAPRKRFPGDIKSFSHELNSKGVRPFPLWKPRRSNNVEEVLNLIRAKFEKAKEEVNSDLAVFAADLVGVLEKNAESHPEWEETFEDLLILARSCAMTTPGDFWLQCEGIVQDLDDRRQELPPGVLKQLHTRMLFILTRCTRLLQFHKESWGEEEQVVQLRQSRVLHSIEKIPPSGAGRSYSAAKVPSTKKAYSQEQHGLDWKEDAVVRSVPPLAPPENYAIKESESPANIDRMSSWKKLPSPALKTVKEAPASEEQNDSKVEPPNIVGSRQGRDDAAVAILNFPPAKDSHEHSSKHRHNISWGYWGEQPLISEESSIMCRICEEEVPTTHVEDHSRVCTLADKYDQKGLSVDERLMAVAGTLDKIAETFRHKDSLAAAESPDGMKVSNSHLTEESDVLSPRLSDWSRKGSEDMLDCFPEADNSIFMDDLRGLPLMSCRTRFGPKSDQGMTTSSASSMTPRSPIPTPRPDPIEQILGGKGTFHDQDDIPQMSELADIAKCAADAIPGDDQSIPFLLSCLEDLRVVIDRRKFDALTVETFGTRIEKLIREKYVHMCELMDDEKVDLLSTVIDEDAPLEDDVVRSLRTSPVHPRDRTSIDDFEIIKPISRGAFGRVFLAKKRTTGDLFAIKVLKKADMIRKNAVESILAERDILINVRNPFVVRFFYSFTCRDNLYLVMEYLNGGDLYSLLRNLGCLEEDIVRVYIAEVVLALEYLHSEGVVHRDLKPDNLLIAHDGHIKLTDFGLSKVGLINSTDDLAGPAVSGTSLLDEEESRLAASEEQLERRKKRSAVGTPDYLAPEILLGTGHGATADWWSVGIILFELIVGIPPFNAEHPQQIFDNILNRKIPWPHVPEEMSAEAHDIIDRFLTEDPHQRLGARGAAEVKQHIFFKDINWDTLARQKAAFVPASESAIDTSYFRSRYSWNTSDEQFFPSGEVPDYSDADSMTNSSGCSSNHHEEGEAEECEGHAEFESGIPVDYSFSNFSFKNLSQLASINYDLLSKGWKDEPQQIPHHK.

3 disordered regions span residues 1–274, 457–480, and 524–553; these read MVFK…SESP, SGAG…QEQH, and SPAL…VGSR. The span at 10-32 shows a compositional bias: low complexity; the sequence is SSKKSGSSSPDSSNSPRSVGSNS. Ser-32 is subject to Phosphoserine. 3 stretches are compositionally biased toward basic and acidic residues: residues 68-77, 101-112, and 178-208; these read DGLKKKDGSS, EVKKPPPPEVKE, and RKKE…RDSL. Low complexity predominate over residues 214-249; sequence PPRSLSPTLPPSGSRLQNVASSSGTGRSEMSSGRSG. The C2H2-type; atypical zinc finger occupies 602 to 621; it reads CRICEEEVPTTHVEDHSRVC. The interval 724–750 is disordered; that stretch reads FGPKSDQGMTTSSASSMTPRSPIPTPR. The segment covering 730–740 has biased composition (polar residues); it reads QGMTTSSASSM. Positions 882–1171 constitute a Protein kinase domain; sequence FEIIKPISRG…AAEVKQHIFF (290 aa). ATP is bound by residues 888-896 and Lys-911; that span reads ISRGAFGRV. Asp-1005 serves as the catalytic Proton acceptor. Ser-1070 bears the Phosphoserine mark. Residues 1172–1277 form the AGC-kinase C-terminal domain; that stretch reads KDINWDTLAR…KNLSQLASIN (106 aa). The tract at residues 1214 to 1245 is disordered; it reads PSGEVPDYSDADSMTNSSGCSSNHHEEGEAEE. Positions 1225 to 1235 are enriched in polar residues; the sequence is DSMTNSSGCSS. The segment covering 1236–1245 has biased composition (basic and acidic residues); it reads NHHEEGEAEE.

This sequence belongs to the protein kinase superfamily. AGC Ser/Thr protein kinase family.

It carries out the reaction L-seryl-[protein] + ATP = O-phospho-L-seryl-[protein] + ADP + H(+). The catalysed reaction is L-threonyl-[protein] + ATP = O-phospho-L-threonyl-[protein] + ADP + H(+). Its function is as follows. May be involved in root hair elongation. The polypeptide is Probable serine/threonine protein kinase IREH1 (Arabidopsis thaliana (Mouse-ear cress)).